The following is a 268-amino-acid chain: Indole-3-glycerol phosphate synthase (268 aa).

Belongs to the TrpC family.

The catalysed reaction is 1-(2-carboxyphenylamino)-1-deoxy-D-ribulose 5-phosphate + H(+) = (1S,2R)-1-C-(indol-3-yl)glycerol 3-phosphate + CO2 + H2O. The protein operates within amino-acid biosynthesis; L-tryptophan biosynthesis; L-tryptophan from chorismate: step 4/5. The chain is Indole-3-glycerol phosphate synthase from Magnetococcus marinus (strain ATCC BAA-1437 / JCM 17883 / MC-1).